The primary structure comprises 132 residues: UPF0201 protein MTH_433 (132 aa).

It belongs to the UPF0201 family.

In Methanothermobacter thermautotrophicus (strain ATCC 29096 / DSM 1053 / JCM 10044 / NBRC 100330 / Delta H) (Methanobacterium thermoautotrophicum), this protein is UPF0201 protein MTH_433.